A 592-amino-acid chain; its full sequence is Craniofacial development protein 2 (592 aa).

Positions 1 to 16 (MEEFDSKDISTSKDED) are enriched in basic and acidic residues. Disordered stretches follow at residues 1–225 (MEEF…KGQS) and 499–592 (VTNE…DCNN). The segment covering 25–42 (HEDDINELVKEDEVDGEE) has biased composition (acidic residues). 2 stretches are compositionally biased toward basic and acidic residues: residues 78–108 (SRESGGRIIEKEDAAAEQEKGAESEDARQEE) and 147–162 (KVEELEKPKKAEEVKL). The span at 175 to 184 (LTQQGRLSGR) shows a compositional bias: polar residues. 4 stretches are compositionally biased toward basic and acidic residues: residues 185–207 (TSEDEPRRSEGVQHATGEERRAD), 508–523 (EEAKSVLKQNEKEKPE), 552–562 (SVFKQDEKDKP), and 580–592 (EKCDLEKKKDCNN). Positions 499 to 578 (VTNEEDATNE…SVPSLPAGSG (80 aa)) are hydrophilic.

In terms of processing, phosphorylated by CK2 (casein kinase II) in vitro. In terms of tissue distribution, expressed in liver and lung with higher expression in brain.

Its subcellular location is the cytoplasm. It is found in the nucleus. In Bos taurus (Bovine), this protein is Craniofacial development protein 2 (CFDP2).